A 390-amino-acid polypeptide reads, in one-letter code: Formate-dependent phosphoribosylglycinamide formyltransferase (390 aa).

Residues 18 to 19 (EL) and E78 contribute to the N(1)-(5-phospho-beta-D-ribosyl)glycinamide site. ATP-binding positions include R110, K151, 156–161 (SSGKGQ), 191–194 (EEFL), and E199. One can recognise an ATP-grasp domain in the interval 115-305 (DLASKELNIK…EFELHLRAFL (191 aa)). Mg(2+)-binding residues include E264 and E276. N(1)-(5-phospho-beta-D-ribosyl)glycinamide is bound by residues D283, K353, and 360–361 (RR).

It belongs to the PurK/PurT family. Homodimer.

The catalysed reaction is N(1)-(5-phospho-beta-D-ribosyl)glycinamide + formate + ATP = N(2)-formyl-N(1)-(5-phospho-beta-D-ribosyl)glycinamide + ADP + phosphate + H(+). Its pathway is purine metabolism; IMP biosynthesis via de novo pathway; N(2)-formyl-N(1)-(5-phospho-D-ribosyl)glycinamide from N(1)-(5-phospho-D-ribosyl)glycinamide (formate route): step 1/1. Its function is as follows. Involved in the de novo purine biosynthesis. Catalyzes the transfer of formate to 5-phospho-ribosyl-glycinamide (GAR), producing 5-phospho-ribosyl-N-formylglycinamide (FGAR). Formate is provided by PurU via hydrolysis of 10-formyl-tetrahydrofolate. The sequence is that of Formate-dependent phosphoribosylglycinamide formyltransferase from Prochlorococcus marinus (strain MIT 9515).